The chain runs to 944 residues: Nonsense-mediated mRNA decay factor SMG8 (944 aa).

Disordered regions lie at residues 559-601 and 629-654; these read LNNG…SNCC and ASSE…TDNE. A compositionally biased stretch (acidic residues) spans 568 to 589; sequence QDEDAEEDEAEEEEGQEQEQPT. The segment covering 629–640 has biased composition (polar residues); the sequence is ASSEQLLNSEQN. The segment covering 641–650 has biased composition (low complexity); it reads TTSSGTSSAD.

It belongs to the SMG8 family.

Involved in nonsense-mediated decay (NMD) of mRNAs containing premature stop codons. Probable component of kinase complex containing nonC and recruited to stalled ribosomes. In Drosophila melanogaster (Fruit fly), this protein is Nonsense-mediated mRNA decay factor SMG8.